Here is a 518-residue protein sequence, read N- to C-terminus: Trigger factor (518 aa).

Positions 170-255 constitute a PPIase FKBP-type domain; sequence GDVVVIDFVG…VKGLESPQEA (86 aa). Residues 447–518 form a disordered region; the sequence is EAPAKPAKKA…AKKAAAKKDA (72 aa). Composition is skewed to basic residues over residues 452–468 and 501–518; these read PAKKAVAKKKAPAKKAA and PAAKKKAPAKKAAAKKDA.

This sequence belongs to the FKBP-type PPIase family. Tig subfamily.

The protein resides in the cytoplasm. The enzyme catalyses [protein]-peptidylproline (omega=180) = [protein]-peptidylproline (omega=0). Involved in protein export. Acts as a chaperone by maintaining the newly synthesized protein in an open conformation. Functions as a peptidyl-prolyl cis-trans isomerase. The chain is Trigger factor from Maricaulis maris (strain MCS10) (Caulobacter maris).